Reading from the N-terminus, the 579-residue chain is Fatty-acid amide hydrolase 1 (579 aa).

A helical membrane pass occupies residues 9–29 (AFSGPSGVALACCLVAAALAL). Over 30–403 (RWSSRRMARG…GDYVDSCLGD (374 aa)) the chain is Cytoplasmic. The active-site Charge relay system is the K142. Residues M191, S217, and 238–241 (IGGS) each bind substrate. The active-site Charge relay system is S217. The active-site Acyl-ester intermediate is the S241. Phosphoserine is present on S241. An intramembrane segment occupies 404 to 433 (LISILRLPKWLKGLLAFMLRPLLPRLAGFL). The Cytoplasmic segment spans residues 434–579 (SSLRPRSAGK…RLMAPGRQPS (146 aa)).

It belongs to the amidase family. As to quaternary structure, homodimer.

It is found in the endoplasmic reticulum membrane. It localises to the golgi apparatus membrane. It carries out the reaction N-(5Z,8Z,11Z,14Z-eicosatetraenoyl)-ethanolamine + H2O = ethanolamine + (5Z,8Z,11Z,14Z)-eicosatetraenoate. It catalyses the reaction (9Z)-octadecenamide + H2O = (9Z)-octadecenoate + NH4(+). The catalysed reaction is 2-(5Z,8Z,11Z,14Z-eicosatetraenoyl)-glycerol + H2O = glycerol + (5Z,8Z,11Z,14Z)-eicosatetraenoate + H(+). The enzyme catalyses 1-O-methyl-(5Z,8Z,11Z,14Z)-eicosatetraenoate + H2O = methanol + (5Z,8Z,11Z,14Z)-eicosatetraenoate + H(+). It carries out the reaction (9Z,12Z,15Z)-octadecatrienamide + H2O = (9Z,12Z,15Z)-octadecatrienoate + NH4(+). It catalyses the reaction (5Z,8Z,11Z,14Z)-eicosatetraenamide + H2O = (5Z,8Z,11Z,14Z)-eicosatetraenoate + NH4(+). The catalysed reaction is (6Z)-octadecenamide + H2O = (6Z)-octadecenoate + NH4(+). The enzyme catalyses (15Z)-tetracosenamide + H2O = (15Z)-tetracosenoate + NH4(+). It carries out the reaction (8Z,11Z,14Z)-eicosatrienamide + H2O = (8Z,11Z,14Z)-eicosatrienoate + NH4(+). It catalyses the reaction (11Z,14Z,17Z)-eicosatrienamide + H2O = (11Z,14Z,17Z)-eicosatrienoate + NH4(+). The catalysed reaction is (11Z,14Z)-eicosadienamide + H2O = (11Z,14Z)-eicosadienoate + NH4(+). The enzyme catalyses (9Z,12Z)-octadecadienamide + H2O = (9Z,12Z)-octadecadienoate + NH4(+). It carries out the reaction tetradecamide + H2O = tetradecanoate + NH4(+). It catalyses the reaction N-(9Z-octadecenoyl) ethanolamine + H2O = ethanolamine + (9Z)-octadecenoate. The catalysed reaction is N-(9Z-octadecenoyl)-taurine + H2O = taurine + (9Z)-octadecenoate. The enzyme catalyses (11Z)-eicosenamide + H2O = (11Z)-eicosenoate + NH4(+). It carries out the reaction N-(9Z-hexadecenoyl) ethanolamine + H2O = (9Z)-hexadecenoate + ethanolamine. It catalyses the reaction N-octadecanoyl ethanolamine + H2O = octadecanoate + ethanolamine. The catalysed reaction is N-docosanoyl-ethanolamine + H2O = docosanoate + ethanolamine. The enzyme catalyses N-tetracosanoyl-taurine + H2O = tetracosanoate + taurine. It carries out the reaction N-(15Z-tetracosenoyl)-ethanolamine + H2O = (15Z)-tetracosenoate + ethanolamine. It catalyses the reaction N-docosanoyl-taurine + H2O = docosanoate + taurine. The catalysed reaction is N-(15Z-tetracosenoyl)-taurine + H2O = (15Z)-tetracosenoate + taurine. The enzyme catalyses N-tricosanoyl-taurine + H2O = tricosanoate + taurine. It carries out the reaction (9Z)-octadecenoate + glycine = N-(9Z-octadecenoyl)glycine + H2O. It catalyses the reaction N-(5Z,8Z,11Z,14Z)-eicosatetraenoyl-glycine + H2O = (5Z,8Z,11Z,14Z)-eicosatetraenoate + glycine. The catalysed reaction is N-(5Z,8Z,11Z,14Z-eicosatetraenoyl)-L-serine + H2O = (5Z,8Z,11Z,14Z)-eicosatetraenoate + L-serine. Inhibited by trifluoromethyl ketone. Its function is as follows. Catalyzes the hydrolysis of endogenous amidated lipids like the sleep-inducing lipid oleamide ((9Z)-octadecenamide), the endocannabinoid anandamide (N-(5Z,8Z,11Z,14Z-eicosatetraenoyl)-ethanolamine), as well as other fatty amides, to their corresponding fatty acids, thereby regulating the signaling functions of these molecules. Also catalyzes the hydrolysis of the endocannabinoid 2-arachidonoylglycerol (2-(5Z,8Z,11Z,14Z-eicosatetraenoyl)-glycerol). FAAH cooperates with PM20D1 in the hydrolysis of amino acid-conjugated fatty acids such as N-fatty acyl glycine and N-fatty acyl-L-serine, thereby acting as a physiological regulator of specific subsets of intracellular, but not of extracellular, N-fatty acyl amino acids. The protein is Fatty-acid amide hydrolase 1 (FAAH) of Sus scrofa (Pig).